We begin with the raw amino-acid sequence, 834 residues long: Periplasmic nitrate reductase (834 aa).

A signal peptide (tat-type signal) is located at residues 1-29; it reads MNLTRREFAKANAAAIAAAAAGLPILVRA. Residues 41-97 form the 4Fe-4S Mo/W bis-MGD-type domain; it reads LDWNKAPCRFCGTGCSVMVATRDGQVVATHGDIKAEVNRGINCVKGYFLSKIMYGSD. [4Fe-4S] cluster contacts are provided by Cys48, Cys51, Cys55, and Cys83. Mo-bis(molybdopterin guanine dinucleotide) is bound by residues Lys85, Gln152, Asn177, Cys181, 214–221, 245–249, 264–266, Met375, Gln379, Asn485, 511–512, Lys534, Asp561, and 721–730; these read WGSNMAEM, STFEH, QTD, SD, and TGRVLEHWHT. Position 797 (Phe797) interacts with substrate. Mo-bis(molybdopterin guanine dinucleotide) contacts are provided by Asn805 and Lys822.

The protein belongs to the prokaryotic molybdopterin-containing oxidoreductase family. NasA/NapA/NarB subfamily. Component of the periplasmic nitrate reductase NapAB complex composed of NapA and NapB. It depends on [4Fe-4S] cluster as a cofactor. Requires Mo-bis(molybdopterin guanine dinucleotide) as cofactor. Predicted to be exported by the Tat system. The position of the signal peptide cleavage has not been experimentally proven.

Its subcellular location is the periplasm. The catalysed reaction is 2 Fe(II)-[cytochrome] + nitrate + 2 H(+) = 2 Fe(III)-[cytochrome] + nitrite + H2O. Functionally, catalytic subunit of the periplasmic nitrate reductase complex NapAB. Receives electrons from NapB and catalyzes the reduction of nitrate to nitrite. The protein is Periplasmic nitrate reductase of Pseudomonas paraeruginosa (strain DSM 24068 / PA7) (Pseudomonas aeruginosa (strain PA7)).